Consider the following 465-residue polypeptide: Ribulose bisphosphate carboxylase large chain (465 aa).

Lysine 4 carries the post-translational modification N6,N6,N6-trimethyllysine. Positions 113 and 163 each coordinate substrate. The active-site Proton acceptor is the lysine 165. Lysine 167 contacts substrate. The Mg(2+) site is built by lysine 191, aspartate 193, and glutamate 194. N6-carboxylysine is present on lysine 191. Histidine 284 functions as the Proton acceptor in the catalytic mechanism. The substrate site is built by arginine 285, histidine 317, and serine 369.

It belongs to the RuBisCO large chain family. Type I subfamily. In terms of assembly, heterohexadecamer of 8 large chains and 8 small chains; disulfide-linked. The disulfide link is formed within the large subunit homodimers. Requires Mg(2+) as cofactor. In terms of processing, the disulfide bond which can form in the large chain dimeric partners within the hexadecamer appears to be associated with oxidative stress and protein turnover.

It is found in the plastid. The protein localises to the chloroplast. It carries out the reaction 2 (2R)-3-phosphoglycerate + 2 H(+) = D-ribulose 1,5-bisphosphate + CO2 + H2O. It catalyses the reaction D-ribulose 1,5-bisphosphate + O2 = 2-phosphoglycolate + (2R)-3-phosphoglycerate + 2 H(+). RuBisCO catalyzes two reactions: the carboxylation of D-ribulose 1,5-bisphosphate, the primary event in carbon dioxide fixation, as well as the oxidative fragmentation of the pentose substrate in the photorespiration process. Both reactions occur simultaneously and in competition at the same active site. This is Ribulose bisphosphate carboxylase large chain from Ilex crenata (Japanese holly).